The primary structure comprises 229 residues: Chromophore lyase CpcT/CpeT 1 (229 aa).

This sequence belongs to the CpcT/CpeT biliprotein lyase family.

Covalently attaches a chromophore to Cys residue(s) of phycobiliproteins. This is Chromophore lyase CpcT/CpeT 1 from Gloeobacter violaceus (strain ATCC 29082 / PCC 7421).